Reading from the N-terminus, the 346-residue chain is GTPase Obg (346 aa).

The 158-residue stretch at Met-1 to Ile-158 folds into the Obg domain. One can recognise an OBG-type G domain in the interval Ala-159–Thr-332. GTP is bound by residues Gly-165 to Ser-172, Phe-190 to His-194, Asp-216 to Gly-219, Asn-286 to Asp-289, and Ser-313 to Leu-315. Residues Ser-172 and Thr-192 each contribute to the Mg(2+) site.

It belongs to the TRAFAC class OBG-HflX-like GTPase superfamily. OBG GTPase family. In terms of assembly, monomer. The cofactor is Mg(2+).

Its subcellular location is the cytoplasm. An essential GTPase which binds GTP, GDP and possibly (p)ppGpp with moderate affinity, with high nucleotide exchange rates and a fairly low GTP hydrolysis rate. Plays a role in control of the cell cycle, stress response, ribosome biogenesis and in those bacteria that undergo differentiation, in morphogenesis control. This chain is GTPase Obg, found in Opitutus terrae (strain DSM 11246 / JCM 15787 / PB90-1).